The following is a 525-amino-acid chain: GMP synthase [glutamine-hydrolyzing] (525 aa).

Positions 9–207 constitute a Glutamine amidotransferase type-1 domain; sequence RILILDFGSQ…ILDICGCEAL (199 aa). Catalysis depends on cysteine 86, which acts as the Nucleophile. Residues histidine 181 and glutamate 183 contribute to the active site. Residues 208–400 form the GMPS ATP-PPase domain; the sequence is WTPSKIAEDA…LGLPYDMVYR (193 aa). Residue 235 to 241 coordinates ATP; sequence SGGVDSS.

Homodimer.

It catalyses the reaction XMP + L-glutamine + ATP + H2O = GMP + L-glutamate + AMP + diphosphate + 2 H(+). The protein operates within purine metabolism; GMP biosynthesis; GMP from XMP (L-Gln route): step 1/1. In terms of biological role, catalyzes the synthesis of GMP from XMP. The sequence is that of GMP synthase [glutamine-hydrolyzing] from Pseudomonas savastanoi pv. phaseolicola (strain 1448A / Race 6) (Pseudomonas syringae pv. phaseolicola (strain 1448A / Race 6)).